A 631-amino-acid polypeptide reads, in one-letter code: Aerobic cobaltochelatase subunit CobT (631 aa).

The segment at 218–306 is disordered; the sequence is KYGDDDNEPD…EVKRPNQPFA (89 aa). 2 stretches are compositionally biased toward acidic residues: residues 222-235 and 243-294; these read DDNE…ETDE and QDEN…DSET. The 220-residue stretch at 412-631 folds into the VWFA domain; sequence VVTLLIDNSG…RGSSRLRRAG (220 aa).

Heterotrimer of CobN, CobS and CobT.

The protein resides in the cytoplasm. It carries out the reaction hydrogenobyrinate a,c-diamide + Co(2+) + ATP + H2O = cob(II)yrinate a,c diamide + ADP + phosphate + 5 H(+). The protein operates within cofactor biosynthesis; adenosylcobalamin biosynthesis; cob(II)yrinate a,c-diamide from precorrin-2 (aerobic route): step 10/10. In terms of biological role, catalyzes cobalt insertion in the corrin ring. This chain is Aerobic cobaltochelatase subunit CobT (cobT), found in Sinorhizobium sp.